A 172-amino-acid chain; its full sequence is Adenine phosphoribosyltransferase (172 aa).

Belongs to the purine/pyrimidine phosphoribosyltransferase family. In terms of assembly, homodimer.

The protein resides in the cytoplasm. The enzyme catalyses AMP + diphosphate = 5-phospho-alpha-D-ribose 1-diphosphate + adenine. The protein operates within purine metabolism; AMP biosynthesis via salvage pathway; AMP from adenine: step 1/1. In terms of biological role, catalyzes a salvage reaction resulting in the formation of AMP, that is energically less costly than de novo synthesis. This is Adenine phosphoribosyltransferase from Pelobacter propionicus (strain DSM 2379 / NBRC 103807 / OttBd1).